The following is a 315-amino-acid chain: Calumenin (315 aa).

An N-terminal signal peptide occupies residues 1-19; the sequence is MNKRPLLLCLGLWVACTLS. EF-hand domains lie at 68–103, 104–139, 151–186, 188–223, 229–264, and 265–300; these read ESKE…AQKK, YVYD…TYLD, QMMI…EEFD, MKDI…HDGD, WVKT…SDYD, and HSEA…FVGS. Residues aspartate 81, aspartate 83, aspartate 85, tyrosine 87, glutamate 92, aspartate 117, serine 119, aspartate 121, and glutamate 128 each coordinate Ca(2+). N-linked (GlcNAc...) asparagine glycosylation is present at asparagine 131. Ca(2+) is bound by residues aspartate 164, aspartate 166, aspartate 168, glutamate 175, aspartate 201, asparagine 203, aspartate 205, glutamate 212, aspartate 242, asparagine 244, aspartate 246, lysine 248, glutamate 253, aspartate 278, asparagine 280, aspartate 282, lysine 284, and glutamate 289. Positions 312–315 match the Prevents secretion from ER motif; sequence HDEF.

Belongs to the CREC family. In terms of assembly, interacts with ggcx.

Its subcellular location is the endoplasmic reticulum membrane. It localises to the golgi apparatus. The protein resides in the secreted. The protein localises to the melanosome. It is found in the sarcoplasmic reticulum lumen. In terms of biological role, involved in regulation of vitamin K-dependent carboxylation of multiple N-terminal glutamate residues. Seems to inhibit gamma-carboxylase ggcx. Binds 7 calcium ions with a low affinity. The chain is Calumenin (calu) from Xenopus laevis (African clawed frog).